The primary structure comprises 467 residues: 3-isopropylmalate dehydratase large subunit (467 aa).

Residues cysteine 349, cysteine 409, and cysteine 412 each coordinate [4Fe-4S] cluster.

The protein belongs to the aconitase/IPM isomerase family. LeuC type 1 subfamily. In terms of assembly, heterodimer of LeuC and LeuD. [4Fe-4S] cluster is required as a cofactor.

The enzyme catalyses (2R,3S)-3-isopropylmalate = (2S)-2-isopropylmalate. It participates in amino-acid biosynthesis; L-leucine biosynthesis; L-leucine from 3-methyl-2-oxobutanoate: step 2/4. Its function is as follows. Catalyzes the isomerization between 2-isopropylmalate and 3-isopropylmalate, via the formation of 2-isopropylmaleate. In Ruegeria sp. (strain TM1040) (Silicibacter sp.), this protein is 3-isopropylmalate dehydratase large subunit.